A 717-amino-acid polypeptide reads, in one-letter code: Polyribonucleotide nucleotidyltransferase (717 aa).

The Mg(2+) site is built by Asp-488 and Asp-494. In terms of domain architecture, KH spans 555–614 (PRIEVMNIPVDKIREVIGSGGKVIREIVEKTGAKINIEDDGTVKIASSSGKEIEAARKWI). One can recognise an S1 motif domain in the interval 624–692 (GQIYEGTVVK…ERGKVRLSMK (69 aa)).

The protein belongs to the polyribonucleotide nucleotidyltransferase family. Mg(2+) serves as cofactor.

The protein localises to the cytoplasm. It catalyses the reaction RNA(n+1) + phosphate = RNA(n) + a ribonucleoside 5'-diphosphate. Its function is as follows. Involved in mRNA degradation. Catalyzes the phosphorolysis of single-stranded polyribonucleotides processively in the 3'- to 5'-direction. This Sinorhizobium fredii (strain NBRC 101917 / NGR234) protein is Polyribonucleotide nucleotidyltransferase.